The sequence spans 406 residues: Phosphopentomutase (406 aa).

6 residues coordinate Mn(2+): D10, D305, H310, D346, H347, and H358.

This sequence belongs to the phosphopentomutase family. It depends on Mn(2+) as a cofactor.

It localises to the cytoplasm. It carries out the reaction 2-deoxy-alpha-D-ribose 1-phosphate = 2-deoxy-D-ribose 5-phosphate. The catalysed reaction is alpha-D-ribose 1-phosphate = D-ribose 5-phosphate. It functions in the pathway carbohydrate degradation; 2-deoxy-D-ribose 1-phosphate degradation; D-glyceraldehyde 3-phosphate and acetaldehyde from 2-deoxy-alpha-D-ribose 1-phosphate: step 1/2. Its function is as follows. Isomerase that catalyzes the conversion of deoxy-ribose 1-phosphate (dRib-1-P) and ribose 1-phosphate (Rib-1-P) to deoxy-ribose 5-phosphate (dRib-5-P) and ribose 5-phosphate (Rib-5-P), respectively. The polypeptide is Phosphopentomutase (Vibrio cholerae serotype O1 (strain ATCC 39541 / Classical Ogawa 395 / O395)).